Consider the following 153-residue polypeptide: MSLDLALDIQHATTCDWLPTDEQFALWVTNAIGNSMNEAELTIRIVDSRESQMLNSTYRGKDKPTNVLSFPFEAPPEIELPLLGDLVICAAVVENEAREQQKTLEAHWAHMVVHGCLHLLGYDHIEDEEAEEMESLETQLIEGLGFTDPYKEQ.

Zn(2+) is bound by residues His-114, His-118, and His-124.

It belongs to the endoribonuclease YbeY family. Requires Zn(2+) as cofactor.

It is found in the cytoplasm. Functionally, single strand-specific metallo-endoribonuclease involved in late-stage 70S ribosome quality control and in maturation of the 3' terminus of the 16S rRNA. The sequence is that of Endoribonuclease YbeY from Shewanella baltica (strain OS195).